The sequence spans 224 residues: Haloacetate dehalogenase H-2 (224 aa).

Asp10 functions as the Nucleophile in the catalytic mechanism.

It belongs to the HAD-like hydrolase superfamily. S-2-haloalkanoic acid dehalogenase family.

The catalysed reaction is a haloacetate + H2O = a halide anion + glycolate + H(+). The sequence is that of Haloacetate dehalogenase H-2 (dehH2) from Moraxella sp. (strain B).